Reading from the N-terminus, the 525-residue chain is Phosphoenolpyruvate carboxykinase (ATP) 1 (525 aa).

The substrate site is built by arginine 55, tyrosine 190, and lysine 196. Residues lysine 196, histidine 215, and 231-239 each bind ATP; that span reads GLSGTGKTT. Mn(2+) is bound by residues lysine 196 and histidine 215. Aspartate 252 is a Mn(2+) binding site. Glutamate 280, arginine 317, and threonine 442 together coordinate ATP. A substrate-binding site is contributed by arginine 317.

It belongs to the phosphoenolpyruvate carboxykinase (ATP) family. Mn(2+) serves as cofactor.

It is found in the cytoplasm. It carries out the reaction oxaloacetate + ATP = phosphoenolpyruvate + ADP + CO2. It participates in carbohydrate biosynthesis; gluconeogenesis. Functionally, involved in the gluconeogenesis. Catalyzes the conversion of oxaloacetate (OAA) to phosphoenolpyruvate (PEP) through direct phosphoryl transfer between the nucleoside triphosphate and OAA. This chain is Phosphoenolpyruvate carboxykinase (ATP) 1, found in Moorella thermoacetica (strain ATCC 39073 / JCM 9320).